Consider the following 352-residue polypeptide: Guanine nucleotide-binding protein alpha-7 subunit (352 aa).

Gly2 is lipidated: N-myristoyl glycine. Cys4 carries S-palmitoyl cysteine lipidation. Residues 32–352 (RIIKLLLLGA…AKNLKSMGLC (321 aa)) form the G-alpha domain. The tract at residues 35–48 (KLLLLGAGESGKST) is G1 motif. GTP contacts are provided by residues 40-47 (GAGESGKS), 174-180 (LRTRIKT), 199-203 (DVGGQ), 268-271 (NKKD), and Ala324. Mg(2+) contacts are provided by Ser47 and Thr180. Residues 172 to 180 (DLLRTRIKT) are G2 motif. A G3 motif region spans residues 195–204 (FRVIDVGGQR). Residues 264–271 (ILFLNKKD) form a G4 motif region. The G5 motif stretch occupies residues 322-327 (TCATDT).

The protein belongs to the G-alpha family. G(i/o/t/z) subfamily. In terms of assembly, g proteins are composed of 3 units; alpha, beta and gamma. The alpha chain contains the guanine nucleotide binding site.

In terms of biological role, guanine nucleotide-binding proteins (G proteins) are involved as modulators or transducers in various transmembrane signaling systems. In Caenorhabditis briggsae, this protein is Guanine nucleotide-binding protein alpha-7 subunit (gpa-7).